Consider the following 358-residue polypeptide: Photosystem II protein D1 2 (358 aa).

3 helical membrane-spanning segments follow: residues 28–45, 117–132, and 141–155; these read YVGW…AATI, HFLI…QWEL, and WICV…AAMA. H117 is a chlorophyll a binding site. Y125 contacts pheophytin a. 2 residues coordinate [CaMn4O5] cluster: D169 and E188. A helical transmembrane segment spans residues 196–217; sequence FHMLGVAGVFGGSLFSAMHGSL. H197 is a binding site for chlorophyll a. A quinone is bound by residues H214 and 263-264; that span reads SF. A Fe cation-binding site is contributed by H214. H271 is a binding site for Fe cation. A helical membrane pass occupies residues 273 to 287; that stretch reads FLGAWPVVGIWFTSM. Positions 331, 332, 341, and 343 each coordinate [CaMn4O5] cluster. Residues 344 to 358 constitute a propeptide that is removed on maturation; sequence AAESTPVALQAPAIG.

The protein belongs to the reaction center PufL/M/PsbA/D family. PSII is composed of 1 copy each of membrane proteins PsbA, PsbB, PsbC, PsbD, PsbE, PsbF, PsbH, PsbI, PsbJ, PsbK, PsbL, PsbM, PsbT, PsbX, PsbY, PsbZ, Psb30/Ycf12, peripheral proteins PsbO, CyanoQ (PsbQ), PsbU, PsbV and a large number of cofactors. It forms dimeric complexes. The cofactor is The D1/D2 heterodimer binds P680, chlorophylls that are the primary electron donor of PSII, and subsequent electron acceptors. It shares a non-heme iron and each subunit binds pheophytin, quinone, additional chlorophylls, carotenoids and lipids. D1 provides most of the ligands for the Mn4-Ca-O5 cluster of the oxygen-evolving complex (OEC). There is also a Cl(-1) ion associated with D1 and D2, which is required for oxygen evolution. The PSII complex binds additional chlorophylls, carotenoids and specific lipids.. Post-translationally, tyr-160 forms a radical intermediate that is referred to as redox-active TyrZ, YZ or Y-Z. C-terminally processed by CtpA; processing is essential to allow assembly of the oxygen-evolving complex and thus photosynthetic growth.

The protein resides in the cellular thylakoid membrane. It catalyses the reaction 2 a plastoquinone + 4 hnu + 2 H2O = 2 a plastoquinol + O2. Photosystem II (PSII) is a light-driven water:plastoquinone oxidoreductase that uses light energy to abstract electrons from H(2)O, generating O(2) and a proton gradient subsequently used for ATP formation. It consists of a core antenna complex that captures photons, and an electron transfer chain that converts photonic excitation into a charge separation. The D1/D2 (PsbA/PsbD) reaction center heterodimer binds P680, the primary electron donor of PSII as well as several subsequent electron acceptors. The chain is Photosystem II protein D1 2 from Synechococcus sp. (strain CC9605).